A 332-amino-acid polypeptide reads, in one-letter code: Probable farnesyl diphosphate synthase (332 aa).

Residues Lys-75, Arg-78, and His-107 each contribute to the isopentenyl diphosphate site. Residues Asp-114 and Asp-120 each coordinate Mg(2+). Arg-125 contacts (2E)-geranyl diphosphate. Arg-126 contacts isopentenyl diphosphate. (2E)-geranyl diphosphate contacts are provided by Lys-208, Ser-209, Gln-250, and Lys-267.

The protein belongs to the FPP/GGPP synthase family. Mg(2+) serves as cofactor.

Its subcellular location is the cytoplasm. The enzyme catalyses isopentenyl diphosphate + (2E)-geranyl diphosphate = (2E,6E)-farnesyl diphosphate + diphosphate. The polypeptide is Probable farnesyl diphosphate synthase (fppS) (Bradyrhizobium diazoefficiens (strain JCM 10833 / BCRC 13528 / IAM 13628 / NBRC 14792 / USDA 110)).